We begin with the raw amino-acid sequence, 199 residues long: Large ribosomal subunit protein bL25 (199 aa).

Belongs to the bacterial ribosomal protein bL25 family. CTC subfamily. In terms of assembly, part of the 50S ribosomal subunit; part of the 5S rRNA/L5/L18/L25 subcomplex. Contacts the 5S rRNA. Binds to the 5S rRNA independently of L5 and L18.

Its function is as follows. This is one of the proteins that binds to the 5S RNA in the ribosome where it forms part of the central protuberance. This is Large ribosomal subunit protein bL25 from Nostoc punctiforme (strain ATCC 29133 / PCC 73102).